The following is a 78-amino-acid chain: Large ribosomal subunit protein bL28 (78 aa).

The tract at residues 1–20 is disordered; sequence MSRVCQVTGKRPAVGNNRSH.

Belongs to the bacterial ribosomal protein bL28 family.

The polypeptide is Large ribosomal subunit protein bL28 (Actinobacillus succinogenes (strain ATCC 55618 / DSM 22257 / CCUG 43843 / 130Z)).